Consider the following 134-residue polypeptide: Phosphoribosyl-AMP cyclohydrolase (134 aa).

Mg(2+) is bound at residue Asp-78. Cys-79 serves as a coordination point for Zn(2+). Asp-80 and Asp-82 together coordinate Mg(2+). Positions 96 and 103 each coordinate Zn(2+).

Belongs to the PRA-CH family. Homodimer. Mg(2+) serves as cofactor. Zn(2+) is required as a cofactor.

It localises to the cytoplasm. It catalyses the reaction 1-(5-phospho-beta-D-ribosyl)-5'-AMP + H2O = 1-(5-phospho-beta-D-ribosyl)-5-[(5-phospho-beta-D-ribosylamino)methylideneamino]imidazole-4-carboxamide. It participates in amino-acid biosynthesis; L-histidine biosynthesis; L-histidine from 5-phospho-alpha-D-ribose 1-diphosphate: step 3/9. Its function is as follows. Catalyzes the hydrolysis of the adenine ring of phosphoribosyl-AMP. In Cupriavidus necator (strain ATCC 17699 / DSM 428 / KCTC 22496 / NCIMB 10442 / H16 / Stanier 337) (Ralstonia eutropha), this protein is Phosphoribosyl-AMP cyclohydrolase.